We begin with the raw amino-acid sequence, 156 residues long: Small ribosomal subunit protein uS7 (156 aa).

This sequence belongs to the universal ribosomal protein uS7 family. As to quaternary structure, part of the 30S ribosomal subunit. Contacts proteins S9 and S11.

Functionally, one of the primary rRNA binding proteins, it binds directly to 16S rRNA where it nucleates assembly of the head domain of the 30S subunit. Is located at the subunit interface close to the decoding center, probably blocks exit of the E-site tRNA. In Polynucleobacter asymbioticus (strain DSM 18221 / CIP 109841 / QLW-P1DMWA-1) (Polynucleobacter necessarius subsp. asymbioticus), this protein is Small ribosomal subunit protein uS7.